The following is a 118-amino-acid chain: Large ribosomal subunit protein uL18 (118 aa).

It belongs to the universal ribosomal protein uL18 family. In terms of assembly, part of the 50S ribosomal subunit; part of the 5S rRNA/L5/L18/L25 subcomplex. Contacts the 5S and 23S rRNAs.

Its function is as follows. This is one of the proteins that bind and probably mediate the attachment of the 5S RNA into the large ribosomal subunit, where it forms part of the central protuberance. The protein is Large ribosomal subunit protein uL18 of Helicobacter pylori (strain P12).